The following is a 156-amino-acid chain: Ribosomal RNA large subunit methyltransferase H (156 aa).

Residues Leu-73, Gly-104, and 123–128 contribute to the S-adenosyl-L-methionine site; that span reads LSALTL.

It belongs to the RNA methyltransferase RlmH family. Homodimer.

It localises to the cytoplasm. It catalyses the reaction pseudouridine(1915) in 23S rRNA + S-adenosyl-L-methionine = N(3)-methylpseudouridine(1915) in 23S rRNA + S-adenosyl-L-homocysteine + H(+). Specifically methylates the pseudouridine at position 1915 (m3Psi1915) in 23S rRNA. In Shewanella oneidensis (strain ATCC 700550 / JCM 31522 / CIP 106686 / LMG 19005 / NCIMB 14063 / MR-1), this protein is Ribosomal RNA large subunit methyltransferase H.